The following is a 162-amino-acid chain: 2-C-methyl-D-erythritol 2,4-cyclodiphosphate synthase (162 aa).

Residues Asp8 and His10 each coordinate a divalent metal cation. 4-CDP-2-C-methyl-D-erythritol 2-phosphate is bound by residues 8–10 and 36–37; these read DVH and HS. A divalent metal cation is bound at residue His44. Residues 58–60, 63–67, 102–108, 134–137, Phe141, and Arg144 contribute to the 4-CDP-2-C-methyl-D-erythritol 2-phosphate site; these read DIG, FPDTD, AQAPKMA, and TTTE.

The protein belongs to the IspF family. Homotrimer. A divalent metal cation serves as cofactor.

It carries out the reaction 4-CDP-2-C-methyl-D-erythritol 2-phosphate = 2-C-methyl-D-erythritol 2,4-cyclic diphosphate + CMP. It participates in isoprenoid biosynthesis; isopentenyl diphosphate biosynthesis via DXP pathway; isopentenyl diphosphate from 1-deoxy-D-xylulose 5-phosphate: step 4/6. Functionally, involved in the biosynthesis of isopentenyl diphosphate (IPP) and dimethylallyl diphosphate (DMAPP), two major building blocks of isoprenoid compounds. Catalyzes the conversion of 4-diphosphocytidyl-2-C-methyl-D-erythritol 2-phosphate (CDP-ME2P) to 2-C-methyl-D-erythritol 2,4-cyclodiphosphate (ME-CPP) with a corresponding release of cytidine 5-monophosphate (CMP). The sequence is that of 2-C-methyl-D-erythritol 2,4-cyclodiphosphate synthase from Yersinia pseudotuberculosis serotype O:1b (strain IP 31758).